A 132-amino-acid chain; its full sequence is Protein NrdI (132 aa).

The protein belongs to the NrdI family.

Its function is as follows. Probably involved in ribonucleotide reductase function. The protein is Protein NrdI of Staphylococcus aureus (strain Mu3 / ATCC 700698).